We begin with the raw amino-acid sequence, 153 residues long: Endoribonuclease YbeY (153 aa).

Residues H112, H116, and H122 each contribute to the Zn(2+) site.

Belongs to the endoribonuclease YbeY family. The cofactor is Zn(2+).

It localises to the cytoplasm. Single strand-specific metallo-endoribonuclease involved in late-stage 70S ribosome quality control and in maturation of the 3' terminus of the 16S rRNA. This chain is Endoribonuclease YbeY, found in Persephonella marina (strain DSM 14350 / EX-H1).